We begin with the raw amino-acid sequence, 364 residues long: Aminomethyltransferase (364 aa).

It belongs to the GcvT family. The glycine cleavage system is composed of four proteins: P, T, L and H.

It catalyses the reaction N(6)-[(R)-S(8)-aminomethyldihydrolipoyl]-L-lysyl-[protein] + (6S)-5,6,7,8-tetrahydrofolate = N(6)-[(R)-dihydrolipoyl]-L-lysyl-[protein] + (6R)-5,10-methylene-5,6,7,8-tetrahydrofolate + NH4(+). Its function is as follows. The glycine cleavage system catalyzes the degradation of glycine. The chain is Aminomethyltransferase from Shewanella piezotolerans (strain WP3 / JCM 13877).